Here is a 495-residue protein sequence, read N- to C-terminus: ESX-2 secretion system ATPase EccB2 (495 aa).

A helical transmembrane segment spans residues Leu-43 to Leu-63.

Belongs to the EccB family. Part of the ESX-2 / type VII secretion system (T7SS), which is composed of cytosolic and membrane components.

It localises to the cell membrane. In terms of biological role, an ATPase. The protein is ESX-2 secretion system ATPase EccB2 (eccB2) of Mycobacterium tuberculosis (strain CDC 1551 / Oshkosh).